The chain runs to 295 residues: Tyrosine recombinase XerC (295 aa).

The region spanning 1–85 is the Core-binding (CB) domain; the sequence is MHILLQKYYN…ALRQFLNYLV (85 aa). The 180-residue stretch at 106-285 folds into the Tyr recombinase domain; it reads YLPKNMDMEQ…DFQHLAQVYD (180 aa). Catalysis depends on residues arginine 145, lysine 169, histidine 237, arginine 240, and histidine 263. Tyrosine 272 (O-(3'-phospho-DNA)-tyrosine intermediate) is an active-site residue.

Belongs to the 'phage' integrase family. XerC subfamily. In terms of assembly, forms a cyclic heterotetrameric complex composed of two molecules of XerC and two molecules of XerD.

It is found in the cytoplasm. Functionally, site-specific tyrosine recombinase, which acts by catalyzing the cutting and rejoining of the recombining DNA molecules. The XerC-XerD complex is essential to convert dimers of the bacterial chromosome into monomers to permit their segregation at cell division. It also contributes to the segregational stability of plasmids. This is Tyrosine recombinase XerC from Histophilus somni (strain 2336) (Haemophilus somnus).